Here is a 292-residue protein sequence, read N- to C-terminus: Elongation factor Ts (292 aa).

Positions 79–82 (TDFV) are involved in Mg(2+) ion dislocation from EF-Tu.

The protein belongs to the EF-Ts family.

Its subcellular location is the cytoplasm. Functionally, associates with the EF-Tu.GDP complex and induces the exchange of GDP to GTP. It remains bound to the aminoacyl-tRNA.EF-Tu.GTP complex up to the GTP hydrolysis stage on the ribosome. The polypeptide is Elongation factor Ts (Metamycoplasma arthritidis (strain 158L3-1) (Mycoplasma arthritidis)).